The sequence spans 312 residues: Olfactory receptor 1F1 (312 aa).

At M1 to H25 the chain is on the extracellular side. N-linked (GlcNAc...) asparagine glycosylation is present at N5. Residues L26–V49 form a helical membrane-spanning segment. Over S50 to T57 the chain is Cytoplasmic. The chain crosses the membrane as a helical span at residues P58–P79. Residues K80–Q100 are Extracellular-facing. Cysteines 97 and 189 form a disulfide. Residues M101–Y120 traverse the membrane as a helical segment. Over D121 to Q139 the chain is Cytoplasmic. A helical membrane pass occupies residues L140–L158. The Extracellular portion of the chain corresponds to H159–E196. Residues V197 to M219 form a helical membrane-spanning segment. Over H220–K236 the chain is Cytoplasmic. The helical transmembrane segment at A237–Y259 threads the bilayer. Residues F260 to T272 are Extracellular-facing. Residues M273–L292 form a helical membrane-spanning segment. Residues R293–V312 lie on the Cytoplasmic side of the membrane.

The protein belongs to the G-protein coupled receptor 1 family.

Its subcellular location is the cell membrane. In terms of biological role, odorant receptor. The protein is Olfactory receptor 1F1 (OR1F1) of Homo sapiens (Human).